The sequence spans 177 residues: Endoribonuclease YbeY (177 aa).

Zn(2+) contacts are provided by H142, H146, and H152.

Belongs to the endoribonuclease YbeY family. Requires Zn(2+) as cofactor.

It is found in the cytoplasm. In terms of biological role, single strand-specific metallo-endoribonuclease involved in late-stage 70S ribosome quality control and in maturation of the 3' terminus of the 16S rRNA. The polypeptide is Endoribonuclease YbeY (Synechococcus sp. (strain CC9311)).